The chain runs to 495 residues: Trimethylamine methyltransferase MttB1 (495 aa).

Pyl334 is a non-standard amino acid (pyrrolysine).

This sequence belongs to the trimethylamine methyltransferase family. In terms of assembly, can form a complex with MttC.

It carries out the reaction Co(I)-[trimethylamine-specific corrinoid protein] + trimethylamine + H(+) = methyl-Co(III)-[trimethylamine-specific corrinoid protein] + dimethylamine. Its pathway is one-carbon metabolism; methanogenesis from trimethylamine. Its function is as follows. Catalyzes the transfer of a methyl group from trimethylamine to the corrinoid cofactor of MttC. The polypeptide is Trimethylamine methyltransferase MttB1 (mttB1) (Methanosarcina mazei (strain ATCC BAA-159 / DSM 3647 / Goe1 / Go1 / JCM 11833 / OCM 88) (Methanosarcina frisia)).